The chain runs to 248 residues: Adenylate kinase (248 aa).

37–42 (GAGKGT) lines the ATP pocket. Residues 57–86 (SPGNLLREEMNRNSPITAQIKDYVSKGQLV) form an NMP region. AMP contacts are provided by residues Arg-63, 84–86 (QLV), 111–114 (GFPR), and Gln-118. The tract at residues 149–181 (GRRFDPITGNTYHIIYDPPPPDIADRVVVRTDD) is LID. Residue Arg-150 coordinates ATP. 2 residues coordinate AMP: Arg-178 and Arg-189.

It belongs to the adenylate kinase family. In terms of assembly, monomer.

It is found in the cytoplasm. It carries out the reaction AMP + ATP = 2 ADP. Catalyzes the reversible transfer of the terminal phosphate group between ATP and AMP. Plays an important role in cellular energy homeostasis and in adenine nucleotide metabolism. The protein is Adenylate kinase of Giardia intestinalis (Giardia lamblia).